The primary structure comprises 614 residues: MATATLTLFLGLLALTSTILSFNADARPQPSDEDLGTIIGPHQTSFDDEIGIVIGPHATVDDEDIDMDMGTTVGPQTNLNDDDLGTIIGPEFEIHKQDFPADFIFGTSVSAYQVEGAKKGSGRGLTSWDEFTHMFPEKVQQNGDGDEGVDFYTRYKDDIKLMKELNTNGFRFSISWTRILPYGTIKKGVNEEGVKFYNDLINELLANGIQPSVTLFHWESPLALEMEYGGFLNERIVEDFREFANFCFKEFGDRVKNWATFNEPSVYSVAGYSKGKKAPGRCSKWQAPKCPTGDSSEEPYIVAHNQILAHLAAVDEFRNCKKVEGGGKIGIVLVSHWFEPKDPNSSEDVKAARRSLEYQLGWFLRPLTYGQYPAEMLEDVNIRLREFTPEESEKLRKSLDFVGLNYYGAFFSTPLAKVNSSQLNYETDLRVNWTVITNNLSLPDLQTTSMGIVIYPAGLKNILKHIKDEYMDPEIYIMENGMDEIDYGTKNITEATNDYGRKEFIKSHILIMGKSIRMDKVRLKGYYIWSLMDNFEWDKGYKVRFGLYYVDYNDNMKRYIRSSGKWLSEFLDSKETLHKCYFEGHREKGYAPKLFDVEYLEPENSQLSYRSDFM.

The signal sequence occupies residues 1–26 (MATATLTLFLGLLALTSTILSFNADA). A beta-D-glucoside is bound by residues Gln-113, His-217, and 262–263 (NE). Catalysis depends on Glu-263, which acts as the Proton donor. A disulfide bridge links Cys-282 with Cys-290. An N-linked (GlcNAc...) asparagine glycan is attached at Asn-344. A beta-D-glucoside is bound at residue Tyr-407. Asn-419, Asn-432, and Asn-439 each carry an N-linked (GlcNAc...) asparagine glycan. Position 479 (Glu-479) interacts with a beta-D-glucoside. Glu-479 acts as the Nucleophile in catalysis. Asn-491 is a glycosylation site (N-linked (GlcNAc...) asparagine). A beta-D-glucoside is bound by residues Trp-529, 536-537 (EW), and Phe-545.

The protein belongs to the glycosyl hydrolase 1 family.

The enzyme catalyses Hydrolysis of terminal, non-reducing beta-D-glucosyl residues with release of beta-D-glucose.. The sequence is that of Beta-glucosidase 33 from Arabidopsis thaliana (Mouse-ear cress).